The primary structure comprises 129 residues: Glycophorin-A (129 aa).

The N-terminal stretch at Met1–Thr17 is a signal peptide. Gln18 carries the pyrrolidone carboxylic acid modification. The Extracellular segment spans residues Gln18–Val82. 2 O-linked (GalNAc...) serine glycosylation sites follow: Ser29 and Ser30. An O-linked (GalNAc...) threonine glycan is attached at Thr34. A glycan (O-linked (GalNAc...) serine) is linked at Ser40. 2 O-linked (GalNAc...) threonine glycosylation sites follow: Thr41 and Thr48. An O-linked (GalNAc...) serine glycan is attached at Ser56. The chain crosses the membrane as a helical span at residues Ile83–Phe103. At Cys104–Leu129 the chain is on the cytoplasmic side.

It belongs to the glycophorin-A family. Homodimer. Component of the ankyrin-1 complex in the erythrocyte, composed of ANK1, RHCE, RHAG, SLC4A1, EPB42, GYPA, GYPB and AQP1. Interacts with SLC4A1; a GYPA monomer is bound at each end of the SLC4A1 dimer forming a heterotetramer.

It is found in the membrane. In terms of biological role, component of the ankyrin-1 complex, a multiprotein complex involved in the stability and shape of the erythrocyte membrane. Glycophorin A is the major intrinsic membrane protein of the erythrocyte. The N-terminal glycosylated segment, which lies outside the erythrocyte membrane, has MN blood group receptors. Appears to be important for the function of SLC4A1 and is required for high activity of SLC4A1. May be involved in translocation of SLC4A1 to the plasma membrane. In Canis lupus familiaris (Dog), this protein is Glycophorin-A.